A 510-amino-acid polypeptide reads, in one-letter code: Major capsid protein L1 (510 aa).

Positions 490 to 510 (SRKRAAATAAAPTAKRKKVRR) are disordered.

This sequence belongs to the papillomaviridae L1 protein family. Self-assembles into homopentamers. The capsid has an icosahedral symmetry and consists of 72 capsomers, with each capsomer being a pentamer of L1. Interacts with the minor capsid protein L2; this interaction is necessary for viral genome encapsidation. Interacts with protein E2; this interaction enhances E2-dependent replication and transcription activation.

The protein localises to the virion. It localises to the host nucleus. Its function is as follows. Forms an icosahedral capsid with a T=7 symmetry and a 50 nm diameter. The capsid is composed of 72 pentamers linked to each other by disulfide bonds and associated with L2 proteins. Binds to heparan sulfate proteoglycans on cell surface of basal layer keratinocytes to provide initial virion attachment. This binding mediates a conformational change in the virus capsid that facilitates efficient infection. The virion enters the host cell via endocytosis. During virus trafficking, L1 protein dissociates from the viral DNA and the genomic DNA is released to the host nucleus. The virion assembly takes place within the cell nucleus. Encapsulates the genomic DNA together with protein L2. In Human papillomavirus 57, this protein is Major capsid protein L1.